A 646-amino-acid polypeptide reads, in one-letter code: Hypoxia up-regulated protein 1 (646 aa).

An N-terminal signal peptide occupies residues 1–22 (MRPLVCVLWMFLFALLSSHTES). Residues 572 to 646 (LFGGGSSVSE…KEEEKAEPQE (75 aa)) form a disordered region. The segment covering 590-610 (VQEEDEVPTEPTKEEEQESAD) has biased composition (acidic residues). Over residues 611-646 (PADKQQDKENNKEKGTSATNEKEEGKKEEEKAEPQE) the composition is skewed to basic and acidic residues.

The protein belongs to the heat shock protein 70 family.

Its subcellular location is the endoplasmic reticulum lumen. Its function is as follows. Has a pivotal role in cytoprotective cellular mechanisms triggered by oxygen deprivation. May play a role as a molecular chaperone and participate in protein folding. The protein is Hypoxia up-regulated protein 1 (hyou1) of Xenopus laevis (African clawed frog).